A 600-amino-acid chain; its full sequence is Chaperone protein DnaK (600 aa).

The residue at position 175 (Thr175) is a Phosphothreonine; by autocatalysis. Residues 569 to 578 (SFAQATAQQA) show a composition bias toward low complexity. Positions 569-600 (SFAQATAQQANTSESDPKADDSNTIDAEIKQD) are disordered. Over residues 583-600 (SDPKADDSNTIDAEIKQD) the composition is skewed to basic and acidic residues.

This sequence belongs to the heat shock protein 70 family.

Its function is as follows. Acts as a chaperone. This chain is Chaperone protein DnaK, found in Mesomycoplasma hyopneumoniae (strain J / ATCC 25934 / NCTC 10110) (Mycoplasma hyopneumoniae).